The chain runs to 859 residues: MAAAMVAAVHGVGRQDRSSPGGGGAPQVDTGKYVRYTPEQVEALERVYGECPKPSSLRRQQLIRECPILSNIEPKQIKVWFQNRRCREKQRKEASRLQTVNRKLTAMNKLLMEENDRLQKQVSRLVYENGYMRQQLHNPSVATTDTSCESVVTSGQHHQQQNPAATRPQRDANNPAGLLAIAEETLAEFLSKATGTAVDWVQMVGMKPGPDSIGIIAVSHNCSGVAARACGLVSLEPTKVAEILKDRPSWYRDCRCVDVLHVIPTGNGGTIELIYMQTYAPTTLAAPRDFWILRYTSGLEDGSLVICERSLTQSTGGPSGPNTPNFVRAEVLPSGYLIRPCEGGGSMIHIVDHVDLDAWSVPEVLRPLYESPKILAQKMTIAALRHIRQIAHESSGEMPYGGGRQPAVLRTFSQRLSRGFNDAVNGFPDDGWSLMSSDGAEDVTIAFNSSPNKLVGSHVNSSQLFSAIGGGILCAKASMLLQNVPPALLVRFLREHRSEWADPGVDAYSAAALRASPYAVPGLRAGGFMGSQVILPLAHTLEHEEFLEVIRLEGHSLCHDEVVLSRDMYLLQLCSGVDENAAGACAQLVFAPIDESFADDAPLLPSGFRVIPLDGKTDAPSATRTLDLASTLEVGSGGTTRASSDTSSTCNTRSVLTIAFQFSYENHLRESVAAMARQYVRTVVASVQRVAMAIAPSRLGGQIETKNPPGSPEAHTLARWIGRSYRFHTGADLLRTDSQSMDSSLKAMWQHSDSIMCCSLKAAPVFTFANQAGLDMLETTLIALQDISLEKILDDDGRKALCTEFPKIMQQGFAYLPGGVCVSSMGRPVSYEQAVAWKVLSDDDTPHCLAFMFVNWSFV.

The interval 7-31 (AAVHGVGRQDRSSPGGGGAPQVDTG) is disordered. Residues 29–92 (DTGKYVRYTP…NRRCREKQRK (64 aa)) constitute a DNA-binding region (homeobox). Positions 100 to 129 (VNRKLTAMNKLLMEENDRLQKQVSRLVYEN) form a coiled coil. Residues 146-164 (TSCESVVTSGQHHQQQNPA) are compositionally biased toward polar residues. Residues 146 to 172 (TSCESVVTSGQHHQQQNPAATRPQRDA) form a disordered region. Residues 171-393 (DANNPAGLLA…LRHIRQIAHE (223 aa)) form the START domain.

This sequence belongs to the HD-ZIP homeobox family. Class III subfamily. As to expression, expressed in seedlings, roots, stems, leaf sheaths and blades and panicles.

The protein resides in the nucleus. Probable transcription factor. In Oryza sativa subsp. indica (Rice), this protein is Homeobox-leucine zipper protein HOX32 (HOX32).